A 303-amino-acid chain; its full sequence is tRNA pseudouridine synthase B (303 aa).

Catalysis depends on Asp-47, which acts as the Nucleophile.

The protein belongs to the pseudouridine synthase TruB family. Type 1 subfamily.

The catalysed reaction is uridine(55) in tRNA = pseudouridine(55) in tRNA. Responsible for synthesis of pseudouridine from uracil-55 in the psi GC loop of transfer RNAs. The sequence is that of tRNA pseudouridine synthase B from Legionella pneumophila subsp. pneumophila (strain Philadelphia 1 / ATCC 33152 / DSM 7513).